The primary structure comprises 264 residues: Ribosomal RNA small subunit methyltransferase A (264 aa).

Residues N12, L14, G39, E60, D83, and N103 each coordinate S-adenosyl-L-methionine.

It belongs to the class I-like SAM-binding methyltransferase superfamily. rRNA adenine N(6)-methyltransferase family. RsmA subfamily.

It localises to the cytoplasm. The catalysed reaction is adenosine(1518)/adenosine(1519) in 16S rRNA + 4 S-adenosyl-L-methionine = N(6)-dimethyladenosine(1518)/N(6)-dimethyladenosine(1519) in 16S rRNA + 4 S-adenosyl-L-homocysteine + 4 H(+). Functionally, specifically dimethylates two adjacent adenosines (A1518 and A1519) in the loop of a conserved hairpin near the 3'-end of 16S rRNA in the 30S particle. May play a critical role in biogenesis of 30S subunits. This Syntrophotalea carbinolica (strain DSM 2380 / NBRC 103641 / GraBd1) (Pelobacter carbinolicus) protein is Ribosomal RNA small subunit methyltransferase A.